A 359-amino-acid polypeptide reads, in one-letter code: tRNA-specific 2-thiouridylase MnmA (359 aa).

Residues 9-16 and Met-35 each bind ATP; that span reads GMSGGVDS. Residue Cys-105 is the Nucleophile of the active site. Cys-105 and Cys-203 are oxidised to a cystine. Residue Gly-129 coordinates ATP. The interaction with tRNA stretch occupies residues 153 to 155; the sequence is KDQ. The Cysteine persulfide intermediate role is filled by Cys-203. The interaction with tRNA stretch occupies residues 309 to 310; the sequence is RY.

It belongs to the MnmA/TRMU family.

It is found in the cytoplasm. The catalysed reaction is S-sulfanyl-L-cysteinyl-[protein] + uridine(34) in tRNA + AH2 + ATP = 2-thiouridine(34) in tRNA + L-cysteinyl-[protein] + A + AMP + diphosphate + H(+). Catalyzes the 2-thiolation of uridine at the wobble position (U34) of tRNA, leading to the formation of s(2)U34. The chain is tRNA-specific 2-thiouridylase MnmA from Acetivibrio thermocellus (strain ATCC 27405 / DSM 1237 / JCM 9322 / NBRC 103400 / NCIMB 10682 / NRRL B-4536 / VPI 7372) (Clostridium thermocellum).